Reading from the N-terminus, the 214-residue chain is tRNA (guanine-N(7)-)-methyltransferase (214 aa).

Residues Glu-43, Glu-68, Asn-99, and Asp-121 each coordinate S-adenosyl-L-methionine. Asp-121 is an active-site residue. Residues Lys-125, Asp-157, and 194–197 (TEYE) contribute to the substrate site.

The protein belongs to the class I-like SAM-binding methyltransferase superfamily. TrmB family.

It carries out the reaction guanosine(46) in tRNA + S-adenosyl-L-methionine = N(7)-methylguanosine(46) in tRNA + S-adenosyl-L-homocysteine. It functions in the pathway tRNA modification; N(7)-methylguanine-tRNA biosynthesis. Catalyzes the formation of N(7)-methylguanine at position 46 (m7G46) in tRNA. This Alkaliphilus metalliredigens (strain QYMF) protein is tRNA (guanine-N(7)-)-methyltransferase.